A 109-amino-acid polypeptide reads, in one-letter code: ATPase inhibitor mai-2, mitochondrial (109 aa).

2 disordered regions span residues 17–39 (RFST…SIRD) and 73–95 (QEVD…HQKR). Positions 21 to 35 (GGHGDGAGRGGGSGG) are enriched in gly residues. Residues 45–109 (GKMEAAREDE…EAEERALGKE (65 aa)) adopt a coiled-coil conformation.

The protein belongs to the ATPase inhibitor family.

It localises to the mitochondrion. Functionally, thought to be a regulatory component of the ATP-synthesizing complex in the mitochondria. In Caenorhabditis briggsae, this protein is ATPase inhibitor mai-2, mitochondrial.